Reading from the N-terminus, the 145-residue chain is D-aminoacyl-tRNA deacylase (145 aa).

Positions 137–138 (GP) match the Gly-cisPro motif, important for rejection of L-amino acids motif.

This sequence belongs to the DTD family. Homodimer.

The protein resides in the cytoplasm. It carries out the reaction glycyl-tRNA(Ala) + H2O = tRNA(Ala) + glycine + H(+). The enzyme catalyses a D-aminoacyl-tRNA + H2O = a tRNA + a D-alpha-amino acid + H(+). In terms of biological role, an aminoacyl-tRNA editing enzyme that deacylates mischarged D-aminoacyl-tRNAs. Also deacylates mischarged glycyl-tRNA(Ala), protecting cells against glycine mischarging by AlaRS. Acts via tRNA-based rather than protein-based catalysis; rejects L-amino acids rather than detecting D-amino acids in the active site. By recycling D-aminoacyl-tRNA to D-amino acids and free tRNA molecules, this enzyme counteracts the toxicity associated with the formation of D-aminoacyl-tRNA entities in vivo and helps enforce protein L-homochirality. The polypeptide is D-aminoacyl-tRNA deacylase (Pseudomonas aeruginosa (strain UCBPP-PA14)).